A 307-amino-acid chain; its full sequence is Ornithine carbamoyltransferase (307 aa).

Residues 56-59 (STRT), Gln-83, Arg-107, and 134-137 (HPCQ) contribute to the carbamoyl phosphate site. Residues Asn-165, Asp-223, and 227 to 228 (SM) contribute to the L-ornithine site. Residues 263-264 (CL) and Arg-291 contribute to the carbamoyl phosphate site.

The protein belongs to the aspartate/ornithine carbamoyltransferase superfamily. OTCase family.

The protein localises to the cytoplasm. It catalyses the reaction carbamoyl phosphate + L-ornithine = L-citrulline + phosphate + H(+). Its pathway is amino-acid degradation; L-arginine degradation via ADI pathway; carbamoyl phosphate from L-arginine: step 2/2. In terms of biological role, reversibly catalyzes the transfer of the carbamoyl group from carbamoyl phosphate (CP) to the N(epsilon) atom of ornithine (ORN) to produce L-citrulline. This Cupriavidus taiwanensis (strain DSM 17343 / BCRC 17206 / CCUG 44338 / CIP 107171 / LMG 19424 / R1) (Ralstonia taiwanensis (strain LMG 19424)) protein is Ornithine carbamoyltransferase.